The primary structure comprises 258 residues: Ribosomal RNA small subunit methyltransferase J (258 aa).

S-adenosyl-L-methionine-binding positions include 107-108, 123-124, 159-160, and D177; these read RD, ER, and SS.

The protein belongs to the methyltransferase superfamily. RsmJ family.

The protein resides in the cytoplasm. It carries out the reaction guanosine(1516) in 16S rRNA + S-adenosyl-L-methionine = N(2)-methylguanosine(1516) in 16S rRNA + S-adenosyl-L-homocysteine + H(+). Specifically methylates the guanosine in position 1516 of 16S rRNA. The polypeptide is Ribosomal RNA small subunit methyltransferase J (Shewanella sediminis (strain HAW-EB3)).